Reading from the N-terminus, the 543-residue chain is Plant intracellular Ras-group-related LRR protein 5 (543 aa).

LRR repeat units lie at residues 239–262 (LQDV…IGSL), 264–284 (YLTK…AFGE), 285–307 (LSNL…SFGN), 309–331 (TSLA…LGKL), 332–354 (ANLR…IGSC), 356–377 (SLVE…IGKL), 378–400 (EKLE…VGSL), 402–424 (RLRE…CFAT), 426–448 (LVKL…IGNL), and 449–470 (EMLE…SFRC). The stretch at 472–494 (SRLRVFHADETPLEFPPREVVKL) is one LRR 11; degenerate repeat. The GVYW; degenerate signature appears at 495-502 (GAQAVVKY).

The protein belongs to the SHOC2 family. In terms of tissue distribution, widely expressed.

Its function is as follows. Leucine-rich repeat protein that likely mediates protein interactions, possibly in the context of signal transduction. The chain is Plant intracellular Ras-group-related LRR protein 5 (IRL5) from Oryza sativa subsp. japonica (Rice).